The sequence spans 164 residues: Pyruvoyl-dependent arginine decarboxylase (164 aa).

S52 is modified (pyruvic acid (Ser)).

This sequence belongs to the PdaD family. Pyruvate serves as cofactor.

It carries out the reaction L-arginine + H(+) = agmatine + CO2. This Methanococcus maripaludis (strain C5 / ATCC BAA-1333) protein is Pyruvoyl-dependent arginine decarboxylase.